The following is a 273-amino-acid chain: MQESTANKVAANATSSFTEHLQRDRPELLPFNRSGQGSATAAAPLQVPHATTIVAMSYNGGVLMAGDRRATMGNVIASRHIEKVFPADRYSVLGIAGTAGIAIDLTRLFQVELEHYEKIEGTLLSLEGKANRLGAMIRGNLPLAMQGLAVVPLFAGFDTSAGVGRLFSYDVTGGRYEEHEHHTVGSGSVFARGALKKLWRPNLSAEEAVAVAIEALFDAADDDSATGGPDTVRKLWPVVYTVDSTGTRRVAEPQLAAASQHVIEARTIAGREA.

A compositionally biased stretch (polar residues) spans 1-19; sequence MQESTANKVAANATSSFTE. The segment at 1 to 23 is disordered; it reads MQESTANKVAANATSSFTEHLQR. Positions 1 to 50 are cleaved as a propeptide — removed in mature form; by autocatalysis; that stretch reads MQESTANKVAANATSSFTEHLQRDRPELLPFNRSGQGSATAAAPLQVPHA. T51 functions as the Nucleophile in the catalytic mechanism.

Belongs to the peptidase T1B family. As to quaternary structure, the 20S proteasome core is composed of 14 alpha and 14 beta subunits that assemble into four stacked heptameric rings, resulting in a barrel-shaped structure. The two inner rings, each composed of seven catalytic beta subunits, are sandwiched by two outer rings, each composed of seven alpha subunits. The catalytic chamber with the active sites is on the inside of the barrel. Has a gated structure, the ends of the cylinder being occluded by the N-termini of the alpha-subunits. Is capped by the proteasome-associated ATPase, ARC.

It is found in the cytoplasm. It catalyses the reaction Cleavage of peptide bonds with very broad specificity.. The protein operates within protein degradation; proteasomal Pup-dependent pathway. Its activity is regulated as follows. The formation of the proteasomal ATPase ARC-20S proteasome complex, likely via the docking of the C-termini of ARC into the intersubunit pockets in the alpha-rings, may trigger opening of the gate for substrate entry. Interconversion between the open-gate and close-gate conformations leads to a dynamic regulation of the 20S proteasome proteolysis activity. Component of the proteasome core, a large protease complex with broad specificity involved in protein degradation. This is Proteasome subunit beta from Pseudarthrobacter chlorophenolicus (strain ATCC 700700 / DSM 12829 / CIP 107037 / JCM 12360 / KCTC 9906 / NCIMB 13794 / A6) (Arthrobacter chlorophenolicus).